The sequence spans 180 residues: MREVITLLFALVSFIHGSISEKYELYREFLETKNVKLAEKILRKYPNAPFKNELYIFLIEKYYRTNPRKAKIFIKKLNVKRIPYYKVKEFVKIYKKLGLNLKPFVVQYPEFFLKDLRKFKLSQEEREKIAKRLYRLRKYRYVLKLTKDCYLKGKTYYRLEKYKIAERILKNCPKKEPKSF.

This is an uncharacterized protein from Aquifex aeolicus (strain VF5).